The chain runs to 125 residues: MILGTGIDIVEVPRIAQSIQRFGDRFLGRIYTPAEIRYCQSKANAVERFAARFAAKEAAMKAIGTGMRGGVTWHDFEVGREPGGRPTMVFHGKAAQVAQGLGGRRAHLSVSHTEQYAVASVILED.

Residues aspartate 8 and glutamate 57 each coordinate Mg(2+).

The protein belongs to the P-Pant transferase superfamily. AcpS family. Requires Mg(2+) as cofactor.

The protein resides in the cytoplasm. The enzyme catalyses apo-[ACP] + CoA = holo-[ACP] + adenosine 3',5'-bisphosphate + H(+). Transfers the 4'-phosphopantetheine moiety from coenzyme A to a Ser of acyl-carrier-protein. This chain is Holo-[acyl-carrier-protein] synthase, found in Koribacter versatilis (strain Ellin345).